Here is a 156-residue protein sequence, read N- to C-terminus: Small ribosomal subunit protein uS7 (156 aa).

This sequence belongs to the universal ribosomal protein uS7 family. Part of the 30S ribosomal subunit. Contacts proteins S9 and S11.

In terms of biological role, one of the primary rRNA binding proteins, it binds directly to 16S rRNA where it nucleates assembly of the head domain of the 30S subunit. Is located at the subunit interface close to the decoding center, probably blocks exit of the E-site tRNA. In Pelotomaculum thermopropionicum (strain DSM 13744 / JCM 10971 / SI), this protein is Small ribosomal subunit protein uS7.